The chain runs to 915 residues: Probable dipeptidyl-aminopeptidase B (915 aa).

2 disordered regions span residues 1-20 (MAGE…TRGS) and 52-74 (QDSR…NEEE). Over 1 to 95 (MAGEKGGSRD…GGKTVQKTTK (95 aa)) the chain is Cytoplasmic. Over residues 55–72 (RLGEKDQRDDDHDQYRNE) the composition is skewed to basic and acidic residues. The helical; Signal-anchor for type II membrane protein transmembrane segment at 96–116 (IVLWALLFLCVGGWSLAFVIF) threads the bilayer. Residues 117 to 915 (LFRGHDTPQT…RAETWGGLPV (799 aa)) lie on the Vacuolar side of the membrane. N-linked (GlcNAc...) asparagine glycosylation is found at Asn-133, Asn-179, Asn-349, and Asn-572. The Charge relay system role is filled by Ser-754. An N-linked (GlcNAc...) asparagine glycan is attached at Asn-813. Active-site charge relay system residues include Asp-831 and His-864. Residue Asn-900 is glycosylated (N-linked (GlcNAc...) asparagine).

This sequence belongs to the peptidase S9B family.

The protein resides in the vacuole membrane. It carries out the reaction Release of an N-terminal dipeptide, Xaa-Yaa-|-Zaa-, from a polypeptide, preferentially when Yaa is Pro, provided Zaa is neither Pro nor hydroxyproline.. Type IV dipeptidyl-peptidase which removes N-terminal dipeptides sequentially from polypeptides having unsubstituted N-termini provided that the penultimate residue is proline. The chain is Probable dipeptidyl-aminopeptidase B (DAPB) from Blastomyces gilchristii (strain SLH14081) (Blastomyces dermatitidis).